Reading from the N-terminus, the 227-residue chain is Ribonuclease 3 (227 aa).

An RNase III domain is found at 6-128; the sequence is ASDYQQRIGY…VIAAIYLDAD (123 aa). A Mg(2+)-binding site is contributed by Glu-41. Residue Asp-45 is part of the active site. Mg(2+) contacts are provided by Asp-114 and Glu-117. Glu-117 is an active-site residue. One can recognise a DRBM domain in the interval 155-225; sequence DPKTRLQEWL…ASHAIDQLDS (71 aa). Over residues 203–212 the composition is skewed to basic and acidic residues; sequence GEGSSRRLAE. The segment at 203 to 227 is disordered; it reads GEGSSRRLAEQDAASHAIDQLDSNK.

It belongs to the ribonuclease III family. Homodimer. Mg(2+) is required as a cofactor.

It localises to the cytoplasm. It catalyses the reaction Endonucleolytic cleavage to 5'-phosphomonoester.. Digests double-stranded RNA. Involved in the processing of primary rRNA transcript to yield the immediate precursors to the large and small rRNAs (23S and 16S). Processes some mRNAs, and tRNAs when they are encoded in the rRNA operon. Processes pre-crRNA and tracrRNA of type II CRISPR loci if present in the organism. The protein is Ribonuclease 3 of Xylella fastidiosa (strain M23).